A 369-amino-acid chain; its full sequence is Replication factor C subunit 5 (369 aa).

A disordered region spans residues 21–40; that stretch reads INKGKDVVGFGPPPQSKATP. 79 to 86 contacts ATP; the sequence is GPPGTGKT.

This sequence belongs to the activator 1 small subunits family. Heterotetramer of subunits RFC2, RFC3, RFC4 and RFC5 that can form a complex with RFC1.

It is found in the nucleus. Its function is as follows. Functions in cell replication and proliferation. May be involved in chromatin assembly and remodeling. Plays a role in the negative control of pathogenesis-related gene expression and systemic acquired resistance (SAR). This Arabidopsis thaliana (Mouse-ear cress) protein is Replication factor C subunit 5 (RFC5).